The sequence spans 74 residues: Somatostatin-2 (74 aa).

The propeptide occupies 1–46 (ARGAGLLSQDWSAVEDLLAQMSLPEADAQREAEVVSVATGGRLNLE). Cys63 and Cys74 are joined by a disulfide.

Belongs to the somatostatin family.

It localises to the secreted. Somatostatin inhibits the release of somatotropin. This chain is Somatostatin-2 (sst2), found in Myoxocephalus scorpius (Shorthorn sculpin).